Reading from the N-terminus, the 130-residue chain is Small ribosomal subunit protein uS8 (130 aa).

This sequence belongs to the universal ribosomal protein uS8 family. As to quaternary structure, part of the 30S ribosomal subunit. Contacts proteins S5 and S12.

In terms of biological role, one of the primary rRNA binding proteins, it binds directly to 16S rRNA central domain where it helps coordinate assembly of the platform of the 30S subunit. The protein is Small ribosomal subunit protein uS8 of Teredinibacter turnerae (strain ATCC 39867 / T7901).